The chain runs to 239 residues: Ribonuclease HII (239 aa).

The RNase H type-2 domain occupies 30–221 (GPVAGVDEVG…VRRVATRSNG (192 aa)). Positions 36, 37, and 130 each coordinate a divalent metal cation. The tract at residues 217-239 (TRSNGAATAEREADPPQERDGTG) is disordered. The segment covering 225-239 (AEREADPPQERDGTG) has biased composition (basic and acidic residues).

The protein belongs to the RNase HII family. Requires Mn(2+) as cofactor. The cofactor is Mg(2+).

It localises to the cytoplasm. The catalysed reaction is Endonucleolytic cleavage to 5'-phosphomonoester.. In terms of biological role, endonuclease that specifically degrades the RNA of RNA-DNA hybrids. This Mycobacterium ulcerans (strain Agy99) protein is Ribonuclease HII.